We begin with the raw amino-acid sequence, 133 residues long: MTFTRFVEAGRVALVSYGEHLNKLVVIVDILDQNRILVDSPSHGLKRKVINVKRIALTSIKVDDIARGAPVAEVKSKYTAAKVDETFAASGWGKKLAKREKRAALDDFGRFKVMVARMKKSKAINAELAKLKA.

It belongs to the eukaryotic ribosomal protein eL14 family.

This chain is Large ribosomal subunit protein eL14 (RPL14), found in Griffithsia japonica (Red alga).